A 116-amino-acid polypeptide reads, in one-letter code: Ribosome-binding factor A (116 aa).

This sequence belongs to the RbfA family. As to quaternary structure, monomer. Binds 30S ribosomal subunits, but not 50S ribosomal subunits or 70S ribosomes.

It is found in the cytoplasm. One of several proteins that assist in the late maturation steps of the functional core of the 30S ribosomal subunit. Associates with free 30S ribosomal subunits (but not with 30S subunits that are part of 70S ribosomes or polysomes). Required for efficient processing of 16S rRNA. May interact with the 5'-terminal helix region of 16S rRNA. The polypeptide is Ribosome-binding factor A (Streptococcus sanguinis (strain SK36)).